A 510-amino-acid chain; its full sequence is Histidine ammonia-lyase (510 aa).

The segment at residues 143 to 145 is a cross-link (5-imidazolinone (Ala-Gly)); the sequence is ASG. A 2,3-didehydroalanine (Ser) modification is found at S144.

Belongs to the PAL/histidase family. Post-translationally, contains an active site 4-methylidene-imidazol-5-one (MIO), which is formed autocatalytically by cyclization and dehydration of residues Ala-Ser-Gly.

It is found in the cytoplasm. The enzyme catalyses L-histidine = trans-urocanate + NH4(+). It functions in the pathway amino-acid degradation; L-histidine degradation into L-glutamate; N-formimidoyl-L-glutamate from L-histidine: step 1/3. This is Histidine ammonia-lyase from Psychromonas ingrahamii (strain DSM 17664 / CCUG 51855 / 37).